A 130-amino-acid polypeptide reads, in one-letter code: Organ-specific protein P4 (130 aa).

2 repeat units span residues 60–85 and 86–111. Positions 60–111 are 2 X 26 AA tandem repeats; that stretch reads HAKENKGAIGEFEPCPNASAYGDNEIHANENKGAIGEFETRPNGSAYGDNEI. Residues 79–130 form a disordered region; sequence AYGDNEIHANENKGAIGEFETRPNGSAYGDNEIGAEFTDDFEPRPSMTKYNA.

This sequence to organ specific protein S2. Expressed in pods.

This chain is Organ-specific protein P4, found in Pisum sativum (Garden pea).